A 170-amino-acid chain; its full sequence is NADH-dependent flavin reductase StyB (170 aa).

It belongs to the non-flavoprotein flavin reductase family. In terms of assembly, homodimer.

It catalyses the reaction a reduced flavin + NAD(+) = an oxidized flavin + NADH + 2 H(+). It functions in the pathway aromatic compound metabolism. Reductase component of a two-component system that catalyzes the first step in the aerobic styrene degradation pathway by enantioselective epoxidation of the vinyl side chain. Utilizes NADH to reduce FAD, which is then transferred to the styrene monooxygenase StyA. In Pseudomonas fluorescens, this protein is NADH-dependent flavin reductase StyB (styB).